The primary structure comprises 86 residues: Neurotoxin-like protein NTL2 (86 aa).

A signal peptide spans 1–21 (MKTLLLSLVVVTIVCLDLGYT). 4 disulfides stabilise this stretch: cysteine 24–cysteine 45, cysteine 38–cysteine 63, cysteine 67–cysteine 78, and cysteine 79–cysteine 84.

This sequence belongs to the three-finger toxin family. Short-chain subfamily. Orphan group I sub-subfamily. Expressed by the venom gland.

It localises to the secreted. The chain is Neurotoxin-like protein NTL2 from Naja atra (Chinese cobra).